A 203-amino-acid chain; its full sequence is E3 ubiquitin-protein ligase RNF152 (203 aa).

The RING-type zinc finger occupies 12 to 55 (CQICFNYYSPRRRPKLLDCKHTCCSVCLQQMRTSQKDVRCPWCR). Residues 106–165 (ISKERTLLPGDMGCRLLPGSQQKSLTVVTIPAEQQPLQGGAPQEAVEEEPDRRGVAKSST) form a necessary for interaction with RRAGA region. Residues 140 to 159 (QPLQGGAPQEAVEEEPDRRG) are disordered. Residues 167 to 187 (SGVCTVILVACVLVFLLGIVL) form a helical membrane-spanning segment.

It belongs to the RNF152 family. As to quaternary structure, interacts with RRAGA (inactive GDP-bound form); stimulated by amino acid starvation. Interacts with SEC16A. Post-translationally, ubiquitinated. Autoubiquitinated in vitro, leading to its degradation by the proteasome.

It localises to the lysosome membrane. It catalyses the reaction S-ubiquitinyl-[E2 ubiquitin-conjugating enzyme]-L-cysteine + [acceptor protein]-L-lysine = [E2 ubiquitin-conjugating enzyme]-L-cysteine + N(6)-ubiquitinyl-[acceptor protein]-L-lysine.. The protein operates within protein modification; protein ubiquitination. E3 ubiquitin-protein ligase that acts as a negative regulator of mTORC1 signaling by mediating ubiquitination of RagA/RRAGA and RHEB. Catalyzes 'Lys-63'-linked polyubiquitination of RagA/RRAGA in response to amino acid starvation, thereby regulating mTORC1 signaling. Also mediates monoubiquitination of RHEB, promoting its association with the TSC-TBC complex and subsequent inhibition. Also mediates 'Lys-48'-linked polyubiquitination of target proteins and their subsequent targeting to the proteasome for degradation. Induces apoptosis when overexpressed. The sequence is that of E3 ubiquitin-protein ligase RNF152 from Rattus norvegicus (Rat).